Here is an 811-residue protein sequence, read N- to C-terminus: MPNQGEDCYFFFFYSTCTKGDSCPFRHCEAALGNETVCTLWQEGRCFRQVCRFRHMEIDKKRSEIPCYWENQPTGCQKLNCAFHHNRGRYVDGLFLPPSKTVLPTVPESPEEEVKASQLSVQQNKLSVQSNPSPQLRSVMKVESSENVPSPTHPPVVINAADDDEDDDDQFSEEGDETKTPTLQPTPEVHNGLRVTSVRKPAVNIKQGECLNFGIKTLEEIKSKKMKEKSKKQGEGSSGVSSLLLHPEPVPGPEKENVRTVVRTVTLSTKQGEEPLVRLSLTERLGKRKFSAGGDSDPPLKRSLAQRLGKKVEAPEANIDKTPKRAQVSKSLKERLGMSADPNNEDATEKVNKVGEIHVKTLEEILLERASQKRGELQTKLKTEGPSKTDDSTSGARSSSTIRIKTFSEVLAEKKHRQQEAERQKSKKDTTCIKLKTDSEIKKTVVLPPIVASKGQSEEPAGKTKSMQEVHIKTLEEIKLEKALRVQQSSESSTSSPSQHEATPGARRLLRIAKRTGMKEEKNLQEGNEVDSQSSIRTEAKEASGETTGVDITNIQVKRCETMREKHMQKQQEREKSVLTPLRGDVASCNTQVAEKPVLTAVPGITRHLTKRLPTKSSQKVEVEISGIGDSVLNVKYAAQTLEKRGKAKPKVNVKPSVVKVVSSPKLAPKRKAVEMHPAVIAAVKPLSSSSVLQEPPAKKAAVAVVPLVSEDKSVTVPEAENPRDSLVLPPTQSSSDSSPPEVSGPSSSQMSMKTRRLSSASTGKPQLSVEDDFEKLIWEISGGKLEAEIDLDPGKDEDDLLLELSEMIDS.

3 C3H1-type zinc fingers span residues 2–30 (PNQG…HCEA), 32–58 (LGNE…HMEI), and 61–87 (KRSE…HHNR). Ser-109 is subject to Phosphoserine. Glycyl lysine isopeptide (Lys-Gly) (interchain with G-Cter in SUMO2) cross-links involve residues Lys-115 and Lys-125. At Ser-133 the chain carries Phosphoserine. Disordered regions lie at residues 140-195 (MKVE…GLRV), 224-258 (KKMK…KENV), 286-352 (GKRK…EKVN), and 368-434 (ERAS…TCIK). A Glycyl lysine isopeptide (Lys-Gly) (interchain with G-Cter in SUMO2) cross-link involves residue Lys-141. Ser-150 and Ser-172 each carry phosphoserine. The span at 161-176 (ADDDEDDDDQFSEEGD) shows a compositional bias: acidic residues. Phosphoserine is present on Ser-291. 2 stretches are compositionally biased toward basic and acidic residues: residues 310 to 323 (KKVE…DKTP) and 368 to 391 (ERAS…KTDD). Thr-322 carries the post-translational modification Phosphothreonine. Residues 363–424 (EEILLERASQ…KHRQQEAERQ (62 aa)) adopt a coiled-coil conformation. At Ser-371 the chain carries Phosphoserine. Positions 392–403 (STSGARSSSTIR) are enriched in polar residues. A compositionally biased stretch (basic and acidic residues) spans 418-434 (QQEAERQKSKKDTTCIK). A Glycyl lysine isopeptide (Lys-Gly) (interchain with G-Cter in SUMO2) cross-link involves residue Lys-479. A disordered region spans residues 483–550 (ALRVQQSSES…KEASGETTGV (68 aa)). Residues 487-499 (QQSSESSTSSPSQ) are compositionally biased toward low complexity. Lys-620 is covalently cross-linked (Glycyl lysine isopeptide (Lys-Gly) (interchain with G-Cter in SUMO2)). A disordered region spans residues 716-769 (TVPEAENPRDSLVLPPTQSSSDSSPPEVSGPSSSQMSMKTRRLSSASTGKPQLS). A compositionally biased stretch (low complexity) spans 730–749 (PPTQSSSDSSPPEVSGPSSS). A compositionally biased stretch (polar residues) spans 750–766 (QMSMKTRRLSSASTGKP).

In terms of assembly, interacts with TREX complex components THOC2, DDX39 and POLDIP3; the interactions are ATP-dependent. Interacts with PABPN1; this interaction retains ZC3H11A in nuclear speckles. Interacts with KPNA3.

The protein resides in the nucleus speckle. In terms of biological role, through its association with TREX complex components, may participate in the export and post-transcriptional coordination of selected mRNA transcripts, including those required to maintain the metabolic processes in embryonic cells. Binds RNA. The polypeptide is Zinc finger CCCH domain-containing protein 11A (ZC3H11A) (Pongo abelii (Sumatran orangutan)).